The sequence spans 437 residues: Chromosomal replication initiator protein DnaA (437 aa).

Residues 1–69 (MLGDTTLKQL…AHLFELSTGI (69 aa)) form a domain I, interacts with DnaA modulators region. The segment at 69-100 (IRPKIEIRLGSLKKDVKSSSPKAGVSKGQKST) is domain II. The tract at residues 101–315 (ILNPSFTFDS…GIIIKLNAYA (215 aa)) is domain III, AAA+ region. Residues Gly-145, Gly-147, Lys-148, and Thr-149 each contribute to the ATP site. Residues 316-437 (NLMNQEITLQ…ELKNKIKSRN (122 aa)) form a domain IV, binds dsDNA region.

The protein belongs to the DnaA family. In terms of assembly, oligomerizes as a right-handed, spiral filament on DNA at oriC.

The protein resides in the cytoplasm. In terms of biological role, plays an essential role in the initiation and regulation of chromosomal replication. ATP-DnaA binds to the origin of replication (oriC) to initiate formation of the DNA replication initiation complex once per cell cycle. Binds the DnaA box (a 9 base pair repeat at the origin) and separates the double-stranded (ds)DNA. Forms a right-handed helical filament on oriC DNA; dsDNA binds to the exterior of the filament while single-stranded (ss)DNA is stabiized in the filament's interior. The ATP-DnaA-oriC complex binds and stabilizes one strand of the AT-rich DNA unwinding element (DUE), permitting loading of DNA polymerase. After initiation quickly degrades to an ADP-DnaA complex that is not apt for DNA replication. Binds acidic phospholipids. The chain is Chromosomal replication initiator protein DnaA from Wolinella succinogenes (strain ATCC 29543 / DSM 1740 / CCUG 13145 / JCM 31913 / LMG 7466 / NCTC 11488 / FDC 602W) (Vibrio succinogenes).